Consider the following 556-residue polypeptide: Urocanate hydratase (556 aa).

NAD(+) is bound by residues 52–53 (GG), Q130, 176–178 (GMG), E196, R201, 242–243 (NA), 263–267 (QTSAH), 273–274 (YL), and Y322. C410 is an active-site residue. G492 contributes to the NAD(+) binding site.

This sequence belongs to the urocanase family. NAD(+) is required as a cofactor.

It localises to the cytoplasm. It carries out the reaction 4-imidazolone-5-propanoate = trans-urocanate + H2O. Its pathway is amino-acid degradation; L-histidine degradation into L-glutamate; N-formimidoyl-L-glutamate from L-histidine: step 2/3. In terms of biological role, catalyzes the conversion of urocanate to 4-imidazolone-5-propionate. In Shewanella woodyi (strain ATCC 51908 / MS32), this protein is Urocanate hydratase.